We begin with the raw amino-acid sequence, 89 residues long: Large ribosomal subunit protein bL27 (89 aa).

It belongs to the bacterial ribosomal protein bL27 family.

In Synechococcus sp. (strain JA-3-3Ab) (Cyanobacteria bacterium Yellowstone A-Prime), this protein is Large ribosomal subunit protein bL27.